The chain runs to 260 residues: Hydroxyethylthiazole kinase 1 (260 aa).

Met39 contacts substrate. ATP-binding residues include Arg115 and Thr160. Gly187 contacts substrate.

This sequence belongs to the Thz kinase family. Mg(2+) serves as cofactor.

The catalysed reaction is 5-(2-hydroxyethyl)-4-methylthiazole + ATP = 4-methyl-5-(2-phosphooxyethyl)-thiazole + ADP + H(+). It participates in cofactor biosynthesis; thiamine diphosphate biosynthesis; 4-methyl-5-(2-phosphoethyl)-thiazole from 5-(2-hydroxyethyl)-4-methylthiazole: step 1/1. Functionally, catalyzes the phosphorylation of the hydroxyl group of 4-methyl-5-beta-hydroxyethylthiazole (THZ). This Streptococcus pneumoniae (strain Taiwan19F-14) protein is Hydroxyethylthiazole kinase 1.